The chain runs to 28 residues: Potassium channel toxin kappa-KTx 2.9 (28 aa).

2 cysteine pairs are disulfide-bonded: C4/C22 and C8/C18.

Belongs to the short scorpion toxin superfamily. Potassium channel inhibitor family. Gamma-KTx 2 subfamily. Post-translationally, contains 2 disulfide bonds. In terms of tissue distribution, expressed by the venom gland.

The protein resides in the secreted. In terms of biological role, reversibly blocks voltage-gated potassium channels Kv1.2/KCNA2 and Kv1.3/KCNA3. The protein is Potassium channel toxin kappa-KTx 2.9 of Pandinus imperator (Emperor scorpion).